The chain runs to 227 residues: UPF0758 protein llmg_1515 (227 aa).

One can recognise an MPN domain in the interval 103–225; it reads QVLSSKEYGM…YYSFRERDSN (123 aa). Zn(2+) is bound by residues histidine 174, histidine 176, and aspartate 187. The JAMM motif signature appears at 174 to 187; the sequence is HNHPSGNLQPSQAD.

Belongs to the UPF0758 family.

This Lactococcus lactis subsp. cremoris (strain MG1363) protein is UPF0758 protein llmg_1515.